Reading from the N-terminus, the 1909-residue chain is NFX1-type zinc finger-containing protein 1 (1909 aa).

Basic and acidic residues-rich tracts occupy residues 1–12 (MEDRRPHLEARP) and 76–107 (RNQEGHTSDEARDQRQSQNDTRRRNDDQEGRS). Disordered regions lie at residues 1 to 133 (MEDR…QPQQ) and 787 to 813 (TQSASPAGPENTAQAEGEEEEEGEEEG). Over residues 113-122 (SSDTFQQWHT) the composition is skewed to polar residues. Residues 802–813 (EGEEEEEGEEEG) show a composition bias toward acidic residues. A coiled-coil region spans residues 939 to 964 (RRRILSYERQYRTWAERMAELRLQED). 4 NF-X1-type zinc fingers span residues 1291-1313 (CGHVCTRACHPYDSSHKEFQCMK), 1375-1393 (CGHRCSHLCGEDCVRLCSE), 1433-1455 (CGHPCPGSCHSCFEGRFHERCQQ), and 1463-1480 (CSHKCQEPCTGECPPCQR). Residues 1733–1764 (LAKKRLSFSSQELSDLQSEIQRLTYLVNLLMR) are a coiled coil. The RZ-type zinc finger occupies 1818 to 1889 (ISDEERVQIV…LASEMDGAQH (72 aa)). Positions 1840, 1844, 1860, and 1863 each coordinate Zn(2+).

It belongs to the ZNFX1 family. Interacts with MAVS.

Its subcellular location is the mitochondrion outer membrane. The protein resides in the cytoplasm. It is found in the stress granule. Its function is as follows. RNA-binding protein that initiates the antiviral response and is required to restrict the replication of RNA viruses. Acts as a double-stranded RNA (dsRNA) sensor that recognizes viral RNA and then interacts with MAVS to initiate the type I interferon response. Also required for immunity against some bacteria, such as mycobacteria. In Mus musculus (Mouse), this protein is NFX1-type zinc finger-containing protein 1.